A 242-amino-acid chain; its full sequence is Protein HTATIP2 (242 aa).

A2 carries the post-translational modification N-acetylalanine. Residues 2 to 25 (AETEALSKLREDFRMQNKSVFILG) are required for interaction with elongation factor EEF1A1. Positions 27, 28, 29, 30, 52, 53, 92, 93, 143, 147, 170, and 178 each coordinate NADPH. The active-site Proton acceptor is Y143. Residue K147 is part of the active site.

In terms of assembly, monomer. Forms homodimers during oxidative stress. Interacts (via N-terminus) with elongation factor EEF1A1 (via middle-region); the interaction is direct and competes with EEF1A1 binding to guanyl-nucleotide exchange factor EEF1B2, thereby inhibiting GDP for GTP exchange and reactivation of EEF1A1. Interacts with nuclear transport receptors XPO4, IPO5/RANBP5, IPO7, IPO9 and KPNB1 as well as GCN1L1/GCN1 and LRPPRC probably through their HEAT repeats. Binds NCOA5/CIA.

The protein localises to the cytoplasm. In terms of biological role, represses translation by preventing reactivation of elongation factor eEF1A. May also inhibit nuclear import by competing with nuclear import substrates for binding to a subset of nuclear transport receptors. Has additionally been proposed to act as a redox sensor involved in cellular oxidative stress surveillance. The chain is Protein HTATIP2 (HTATIP2) from Pongo pygmaeus (Bornean orangutan).